A 359-amino-acid polypeptide reads, in one-letter code: Nicotinate-nucleotide--dimethylbenzimidazole phosphoribosyltransferase (359 aa).

Residue Glu-318 is the Proton acceptor of the active site.

This sequence belongs to the CobT family. As to quaternary structure, homodimer.

It carries out the reaction 5,6-dimethylbenzimidazole + nicotinate beta-D-ribonucleotide = alpha-ribazole 5'-phosphate + nicotinate + H(+). It functions in the pathway nucleoside biosynthesis; alpha-ribazole biosynthesis; alpha-ribazole from 5,6-dimethylbenzimidazole: step 1/2. Catalyzes the synthesis of alpha-ribazole-5'-phosphate from nicotinate mononucleotide (NAMN) and 5,6-dimethylbenzimidazole (DMB). The protein is Nicotinate-nucleotide--dimethylbenzimidazole phosphoribosyltransferase of Escherichia coli O157:H7.